A 329-amino-acid chain; its full sequence is Beta-ketoacyl-[acyl-carrier-protein] synthase III (329 aa).

Catalysis depends on residues Cys123 and His256. Positions Gln257–Arg261 are ACP-binding. The active site involves Asn286.

Belongs to the thiolase-like superfamily. FabH family. In terms of assembly, homodimer.

The protein localises to the cytoplasm. The catalysed reaction is malonyl-[ACP] + acetyl-CoA + H(+) = 3-oxobutanoyl-[ACP] + CO2 + CoA. It functions in the pathway lipid metabolism; fatty acid biosynthesis. Catalyzes the condensation reaction of fatty acid synthesis by the addition to an acyl acceptor of two carbons from malonyl-ACP. Catalyzes the first condensation reaction which initiates fatty acid synthesis and may therefore play a role in governing the total rate of fatty acid production. Possesses both acetoacetyl-ACP synthase and acetyl transacylase activities. Its substrate specificity determines the biosynthesis of branched-chain and/or straight-chain of fatty acids. This is Beta-ketoacyl-[acyl-carrier-protein] synthase III from Burkholderia pseudomallei (strain 1710b).